Consider the following 553-residue polypeptide: Serine protease 53 (553 aa).

An N-terminal signal peptide occupies residues 1–23; sequence MKWCWGPVLLIAGATVLMEGLQA. 2 consecutive Peptidase S1 domains span residues 24 to 273 and 294 to 526; these read AQRA…ARVQ and VACG…SLDW. Residues 27 to 46 are disordered; the sequence is ACGQRGPGPPKPQEGNTVPG. Cysteines 62 and 78 form a disulfide. Catalysis depends on charge relay system residues His77 and Asp128. Intrachain disulfides connect Cys158–Cys230, Cys187–Cys209, Cys220–Cys249, and Cys326–Cys342. Active-site charge relay system residues include Ser224, His341, and Asp382. Cystine bridges form between Cys444/Cys464 and Cys474/Cys502. Catalysis depends on Ser478, which acts as the Charge relay system.

It belongs to the peptidase S1 family. In terms of tissue distribution, predominantly detected in testis, liver, heart and ovary, as well as in several tumor cell lines.

It is found in the secreted. Its function is as follows. In vitro can degrade the fibrinogen alpha chain of as well as pro-urokinase-type plasminogen activator. This chain is Serine protease 53 (PRSS53), found in Homo sapiens (Human).